The primary structure comprises 990 residues: Pro-apoptotic serine protease NMA111 (990 aa).

Residues 1–32 form a disordered region; it reads MSVTNSNRKRSLSEVSEGSDPEAPAKTRNSYT. Residues 73 to 263 form a serine protease region; the sequence is VVSIHFSQVA…LPLDRILRAL (191 aa). Residues H111, D142, and S225 each act as charge relay system in the active site. PDZ domains lie at 290–368 and 758–843; these read RRLG…QRGG and SILT…VREG.

The protein belongs to the peptidase S1C family.

The protein localises to the nucleus. Nuclear serine protease which mediates apoptosis. In Vanderwaltozyma polyspora (strain ATCC 22028 / DSM 70294 / BCRC 21397 / CBS 2163 / NBRC 10782 / NRRL Y-8283 / UCD 57-17) (Kluyveromyces polysporus), this protein is Pro-apoptotic serine protease NMA111 (NMA111).